Here is a 545-residue protein sequence, read N- to C-terminus: Tyrosine decarboxylase 2 (545 aa).

The span at 23-44 (GYTNGNGHTNGNGNYNGNGHVN) shows a compositional bias: gly residues. Positions 23–45 (GYTNGNGHTNGNGNYNGNGHVNG) are disordered. L-tyrosine contacts are provided by H245 and H360. The residue at position 361 (K361) is an N6-(pyridoxal phosphate)lysine. Residue Y390 participates in L-tyrosine binding.

Belongs to the group II decarboxylase family. As to quaternary structure, homotetramer. Pyridoxal 5'-phosphate serves as cofactor. Expressed specifically in flowers.

It is found in the cytoplasm. It catalyses the reaction L-tyrosine + H(+) = tyramine + CO2. Functionally, converts tyrosine into tyramine, a precursor of isoquinoline alkaloids and various amides. This Arabidopsis thaliana (Mouse-ear cress) protein is Tyrosine decarboxylase 2.